Reading from the N-terminus, the 20-residue chain is Phospholipase A2 homolog P-elapitoxin-Aa1a gamma chain (20 aa).

This sequence belongs to the phospholipase A2 family. Group I subfamily. As to quaternary structure, heterotrimer of alpha, beta and gamma chains, each related to PLA2. Post-translationally, glycosylated. Expressed by the venom gland.

It localises to the secreted. Functionally, heterotrimer: Snake venom phospholipase A2 (PLA2) that has presynaptic neurotoxicity. Inhibits nerve-evoked twitch contractions but not responses to cholinergic agonists acetylcholine and carbachol and to depolarizing agonist KCl. Causes a fade in tetanic contractions. Displays a triphasic mode of action with depression, enhancement and blockade of neurotransmission. Does not display myotoxic activity such as changes in baseline muscle tension or inhibition of directly stimulated muscle twitches. All subunits are necessary for maximum toxicity. Monomer: the gamma chain has no significant enzymatic activity and is not toxic by itself. This is Phospholipase A2 homolog P-elapitoxin-Aa1a gamma chain from Acanthophis antarcticus (Common death adder).